Consider the following 1104-residue polypeptide: Mitogen-activated protein kinase kinase kinase 9 (1104 aa).

Positions 12-22 are enriched in low complexity; that stretch reads ASAAAAAPPGE. Residues 12–47 are disordered; sequence ASAAAAAPPGEDGAGAGAEEEEEEEEEAAAAVGPGE. Positions 29-39 are enriched in acidic residues; sequence AEEEEEEEEEA. The 65-residue stretch at 52–116 folds into the SH3 domain; the sequence is APLPYWTAVF…PSNYVTPRSA (65 aa). Positions 144–412 constitute a Protein kinase domain; sequence LTLEEIIGIG…LTTIEESGFF (269 aa). ATP is bound by residues 150–158 and K171; that span reads IGIGGFGKV. D268 serves as the catalytic Proton acceptor. Phosphothreonine; by autocatalysis occurs at positions 304 and 305. S308 is subject to Phosphoserine; by autocatalysis. T312 is subject to Phosphothreonine; by autocatalysis. 2 leucine-zipper regions span residues 430-451 and 465-486; these read IQEM…EEEL and LRRR…ELNI. Disordered stretches follow at residues 532–636, 675–742, 781–819, and 890–1038; these read ASPT…PHFH, MEDE…LKRG, EEPE…FKKE, and RDPN…CFAS. S533 is modified (phosphoserine). Polar residues-rich tracts occupy residues 566–575 and 723–739; these read PGESSKTWGR and PVNS…TNSL. The span at 785 to 797 shows a compositional bias: basic and acidic residues; the sequence is PPAREEKKRREGL. The span at 893–910 shows a compositional bias: polar residues; the sequence is NQSLTPTHVTLTTPSQPS. Residues 929-944 are compositionally biased toward low complexity; the sequence is SRSPSSNGLSPSPGAG. The span at 1014 to 1038 shows a compositional bias: polar residues; the sequence is HARSTSPANSSSTETPSNLDSCFAS.

It belongs to the protein kinase superfamily. STE Ser/Thr protein kinase family. MAP kinase kinase kinase subfamily. Homodimer. The cofactor is Mg(2+). In terms of processing, autophosphorylation on serine and threonine residues within the activation loop plays a role in enzyme activation. Thr-312 is likely to be the main autophosphorylation site. Autophosphorylation also occurs on Thr-304 and Ser-308. As to expression, expressed in epithelial tumor cell lines of colonic, breast and esophageal origin.

It carries out the reaction L-seryl-[protein] + ATP = O-phospho-L-seryl-[protein] + ADP + H(+). The catalysed reaction is L-threonyl-[protein] + ATP = O-phospho-L-threonyl-[protein] + ADP + H(+). With respect to regulation, homodimerization via the leucine zipper domains is required for autophosphorylation of multiple sites in the activation loop and subsequent activation. Autophosphorylation at Thr-312 is the key step in activation of MAP3K9/MLK1 and is required for full phosphorylation. Autophosphorylation at Thr-304 and Ser-308 have been shown to be of secondary importance in the activation of MAP3K9/MLK1. CEP-1347 and many indolocarbazole analogs have been shown to act as inhibitors of MAP3K9/MLK1 activity. Functionally, serine/threonine kinase which acts as an essential component of the MAP kinase signal transduction pathway. Plays an important role in the cascades of cellular responses evoked by changes in the environment. Once activated, acts as an upstream activator of the MKK/JNK signal transduction cascade through the phosphorylation of MAP2K4/MKK4 and MAP2K7/MKK7 which in turn activate the JNKs. The MKK/JNK signaling pathway regulates stress response via activator protein-1 (JUN) and GATA4 transcription factors. Also plays a role in mitochondrial death signaling pathway, including the release cytochrome c, leading to apoptosis. This chain is Mitogen-activated protein kinase kinase kinase 9 (MAP3K9), found in Homo sapiens (Human).